The primary structure comprises 224 residues: UPF0111 protein CT_691 (224 aa).

It belongs to the UPF0111 family.

This is UPF0111 protein CT_691 from Chlamydia trachomatis serovar D (strain ATCC VR-885 / DSM 19411 / UW-3/Cx).